We begin with the raw amino-acid sequence, 158 residues long: Lysozyme C (158 aa).

Residues 1 to 18 (MRVLPLALLVGLLAVSDA) form the signal peptide. The C-type lysozyme domain maps to 19–150 (KVLGKCEFAR…DQYMAECWSR (132 aa)). Intrachain disulfides connect cysteine 24–cysteine 147, cysteine 46–cysteine 135, cysteine 80–cysteine 93, and cysteine 89–cysteine 107. Residues glutamate 51 and aspartate 68 contribute to the active site.

The protein belongs to the glycosyl hydrolase 22 family. Monomer. Strongly expressed in gill and gonad, and marginally detectable in hemolymph and lymphoid organ. Not expressed in kidney, hepatopancreas or tail muscle.

The protein localises to the secreted. It carries out the reaction Hydrolysis of (1-&gt;4)-beta-linkages between N-acetylmuramic acid and N-acetyl-D-glucosamine residues in a peptidoglycan and between N-acetyl-D-glucosamine residues in chitodextrins.. Functionally, lysozymes have primarily a bacteriolytic function; those in tissues and body fluids are associated with the monocyte-macrophage system and enhance the activity of immunoagents. Has bacteriolytic activity against Gram-positive bacterium M.luteus, and Gram-negative shrimp pathogenic bacteria V.alginolyticus, V.parahaemolyticus and V.vulnificus. May play a role in host defense. This Penaeus merguiensis (Banana prawn) protein is Lysozyme C.